Here is a 93-residue protein sequence, read N- to C-terminus: UPF0175 protein AF_0100 (93 aa).

Belongs to the UPF0175 family.

This chain is UPF0175 protein AF_0100, found in Archaeoglobus fulgidus (strain ATCC 49558 / DSM 4304 / JCM 9628 / NBRC 100126 / VC-16).